A 309-amino-acid polypeptide reads, in one-letter code: MAADEDELNLLVIIVDTNPIWWGKQALKESQFTLSKCMDAVMVLANAHLFMNRSNQLAVIASHIQESRFLYPGKNGRLGDFFGDPGNALPDCNPSGSKDGKYELLTAANEVIAEEIKDLMTKSDIKGQHTETLLAGSLAKALCYIHRASKAVKDNQEMKSRILVIKAAEDSALQYMNFMNVIFAAQKQNILIDACVLDSDSGLLQQACDITGGLYLKVPQMPSLLQYLLWVFLPDQDQRSQLILPPPIHVDYRAACFCHRSLIEIGYVCSVCLSIFCNFSPICTTCETAFKISLPPVLKAKKKKQKVSL.

The C4-type zinc-finger motif lies at 269-286 (CSVCLSIFCNFSPICTTC).

It belongs to the TFB4 family. In terms of assembly, part of a TFIID-containing RNA polymerase II pre-initiation complex that is composed of TBP and at least GTF2A1, GTF2A2, GTF2E1, GTF2E2, GTF2F1, GTF2H2, GTF2H3, GTF2H4, GTF2H5, GTF2B, TCEA1, ERCC2, ERCC3, TAF1, TAF2, TAF3, TAF4, TAF5, TAF6, TAF7, TAF8, TAF9, TAF10, TAF11, TAF12 and TAF13. Component of the 7-subunit TFIIH core complex composed of XPB/ERCC3, XPD/ERCC2, GTF2H1, GTF2H2, GTF2H3, GTF2H4 and GTF2H5, which is active in NER. The core complex associates with the 3-subunit CDK-activating kinase (CAK) module composed of CCNH/cyclin H, CDK7 and MNAT1 to form the 10-subunit holoenzyme (holo-TFIIH) active in transcription. Interacts with RARA; the interaction requires prior phosphorylation of RARA on 'Ser-369' which then enhances interaction of RARA with CDK7.

It is found in the nucleus. Its function is as follows. Component of the general transcription and DNA repair factor IIH (TFIIH) core complex, which is involved in general and transcription-coupled nucleotide excision repair (NER) of damaged DNA and, when complexed to CAK, in RNA transcription by RNA polymerase II. In NER, TFIIH acts by opening DNA around the lesion to allow the excision of the damaged oligonucleotide and its replacement by a new DNA fragment. In transcription, TFIIH has an essential role in transcription initiation. When the pre-initiation complex (PIC) has been established, TFIIH is required for promoter opening and promoter escape. Phosphorylation of the C-terminal tail (CTD) of the largest subunit of RNA polymerase II by the kinase module CAK controls the initiation of transcription. The polypeptide is General transcription factor IIH subunit 3 (Gtf2h3) (Rattus norvegicus (Rat)).